We begin with the raw amino-acid sequence, 360 residues long: Heat-inducible transcription repressor HrcA (360 aa).

Belongs to the HrcA family.

In terms of biological role, negative regulator of class I heat shock genes (grpE-dnaK-dnaJ and groELS operons). Prevents heat-shock induction of these operons. In Mesorhizobium japonicum (strain LMG 29417 / CECT 9101 / MAFF 303099) (Mesorhizobium loti (strain MAFF 303099)), this protein is Heat-inducible transcription repressor HrcA.